We begin with the raw amino-acid sequence, 176 residues long: MRRTTKETDIIVEIGKKGEIKTNDLILDHMLTAFAFYLGKDMRITATYDLRHHLWEDIGITLGEALRENLPEKFTRFGNAIMPMDDALVLVSVDISNRPYANVDVNIKDAEEGFAVSLLKEFVWGLARGLRATIHIKQLSGENAHHIVEAAFKGLGMALRVATKESERVESTKGVL.

This sequence belongs to the imidazoleglycerol-phosphate dehydratase family.

It is found in the cytoplasm. The catalysed reaction is D-erythro-1-(imidazol-4-yl)glycerol 3-phosphate = 3-(imidazol-4-yl)-2-oxopropyl phosphate + H2O. It participates in amino-acid biosynthesis; L-histidine biosynthesis; L-histidine from 5-phospho-alpha-D-ribose 1-diphosphate: step 6/9. This Pyrococcus furiosus (strain ATCC 43587 / DSM 3638 / JCM 8422 / Vc1) protein is Imidazoleglycerol-phosphate dehydratase.